The following is an 89-amino-acid chain: Putative membrane protein insertion efficiency factor (89 aa).

A disordered region spans residues 68 to 89 (VPPPNSDARNAPHEAEASSHRL). Residues 77–89 (NAPHEAEASSHRL) show a composition bias toward basic and acidic residues.

The protein belongs to the UPF0161 family.

It localises to the cell inner membrane. Functionally, could be involved in insertion of integral membrane proteins into the membrane. The polypeptide is Putative membrane protein insertion efficiency factor (Burkholderia thailandensis (strain ATCC 700388 / DSM 13276 / CCUG 48851 / CIP 106301 / E264)).